Here is a 260-residue protein sequence, read N- to C-terminus: (R)-2-hydroxyglutaryl-CoA dehydratase activating ATPase (260 aa).

Ser12–Lys16 serves as a coordination point for ATP. 2 residues coordinate [4Fe-4S] cluster: Cys127 and Cys166. 2 residues coordinate ATP: Gln220 and Gln243.

The protein belongs to the HgdC family. As to quaternary structure, homodimer. The cofactor is [4Fe-4S] cluster. Mg(2+) serves as cofactor.

The catalysed reaction is ATP + H2O = ADP + phosphate + H(+). It functions in the pathway amino-acid degradation; L-glutamate degradation via hydroxyglutarate pathway; crotonoyl-CoA from L-glutamate: step 4/5. Inactivated by exposure to air within less than 15 minutes. Involved in the fermentation of L-glutamate via the hydroxyglutarate pathway. HgdC (CompA) has a very low ATPase activity, whose the role is to activate dehydratase HgdA-HgdB complex and then maintain an appropriate redox state via an ATP-dependent electron transfer. The dehydratase requires only catalytic amounts of ATP and substoichiometric amounts of HgdC (CompA) to be functional. This chain is (R)-2-hydroxyglutaryl-CoA dehydratase activating ATPase, found in Acidaminococcus fermentans (strain ATCC 25085 / DSM 20731 / CCUG 9996 / CIP 106432 / VR4).